Here is a 1052-residue protein sequence, read N- to C-terminus: Membrane-bound transcription factor site-1 protease (1052 aa).

The signal sequence occupies residues Met1–Gly17. The propeptide occupies Lys18–Leu186. A glycan (N-linked (GlcNAc...) asparagine) is linked at Asn148. Phosphoserine is present on Ser168. Residues Arg187–Gly999 are Lumenal-facing. Residues Pro190–Tyr472 form the Peptidase S8 domain. The active-site Charge relay system is the Asp218. The N-linked (GlcNAc...) asparagine glycan is linked to Asn236. His249 functions as the Charge relay system in the catalytic mechanism. Asn305 carries N-linked (GlcNAc...) asparagine glycosylation. Ser414 serves as the catalytic Charge relay system. N-linked (GlcNAc...) asparagine glycosylation is found at Asn515 and Asn728. A compositionally biased stretch (polar residues) spans Pro877–Arg887. Residues Pro877–Met900 form a disordered region. An N-linked (GlcNAc...) asparagine glycan is attached at Asn939. A helical transmembrane segment spans residues Gln1000–Ser1022. The Cytoplasmic portion of the chain corresponds to Lys1023–Val1052. Residues Ser1026 to Arg1037 are compositionally biased toward basic residues. The tract at residues Ser1026–Val1052 is disordered.

The protein belongs to the peptidase S8 family. In terms of assembly, interacts with LYSET; this interaction bridges GNPTAB to MBTPS1. Requires Ca(2+) as cofactor. Post-translationally, the 148 kDa zymogen is processed progressively into two membrane-bound 120 and 106 kDa forms in the endoplasmic reticulum, and late into a secreted 98 kDa form. The propeptide is autocatalytically removed through an intramolecular cleavage after Leu-186. Further cleavage generates 14, 10, and 8 kDa intermediates.

The protein localises to the endoplasmic reticulum membrane. The protein resides in the golgi apparatus membrane. The enzyme catalyses Processes precursors containing basic and hydrophobic/aliphatic residues at P4 and P2, respectively, with a relatively relaxed acceptance of amino acids at P1 and P3.. Its activity is regulated as follows. Inhibited by divalent copper and zinc ions, but not by nickel or cobalt. Inhibited by its prosegment, but not smaller fragments. Inhibited by 4-(2-aminoethyl)benzenesulfonyl fluoride (AEBSF), a serine protease inhibitor. Functionally, serine protease that cleaves after hydrophobic or small residues, provided that Arg or Lys is in position P4: known substrates include SREBF1/SREBP1, SREBF2/SREBP2, BDNF, GNPTAB, ATF6, ATF6B and FAM20C. Cleaves substrates after Arg-Ser-Val-Leu (SREBP2), Arg-His-Leu-Leu (ATF6), Arg-Gly-Leu-Thr (BDNF) and its own propeptide after Arg-Arg-Leu-Leu. Catalyzes the first step regulated intramembrane proteolysis activation of the sterol regulatory element-binding proteins (SREBPs) SREBF1/SREBP1 and SREBF2/SREBP2. Also mediates the first step of the regulated intramembrane proteolytic activation of the cyclic AMP-dependent transcription factor ATF-6 (ATF6 and ATF6B). Mediates the protein cleavage of GNPTAB into subunit alpha and beta, thereby participating in biogenesis of lysosomes. Cleaves the propeptide from FAM20C which is required for FAM20C secretion from the Golgi apparatus membrane and for enhancement of FAM20C kinase activity, promoting osteoblast differentiation and biomineralization. Involved in the regulation of M6P-dependent Golgi-to-lysosome trafficking of lysosomal enzymes. It is required for the activation of CREB3L2/BBF2H7, a transcriptional activator of MIA3/TANGO and other genes controlling mega vesicle formation. Therefore, it plays a key role in the regulation of mega vesicle-mediated collagen trafficking. In astrocytes and osteoblasts, upon DNA damage and ER stress, mediates the first step of the regulated intramembrane proteolytic activation of the transcription factor CREB3L1, leading to the inhibition of cell-cycle progression. This Mus musculus (Mouse) protein is Membrane-bound transcription factor site-1 protease (Mbtps1).